Reading from the N-terminus, the 349-residue chain is Protein RecA (349 aa).

Gly-64 to Thr-71 is a binding site for ATP. The disordered stretch occupies residues Asn-328 to Lys-349. Residues Ile-331–Lys-349 show a composition bias toward acidic residues.

This sequence belongs to the RecA family.

It is found in the cytoplasm. Can catalyze the hydrolysis of ATP in the presence of single-stranded DNA, the ATP-dependent uptake of single-stranded DNA by duplex DNA, and the ATP-dependent hybridization of homologous single-stranded DNAs. It interacts with LexA causing its activation and leading to its autocatalytic cleavage. This chain is Protein RecA, found in Halalkalibacterium halodurans (strain ATCC BAA-125 / DSM 18197 / FERM 7344 / JCM 9153 / C-125) (Bacillus halodurans).